Consider the following 211-residue polypeptide: Neuroendocrine protein 7B2 (211 aa).

An N-terminal signal peptide occupies residues 1 to 26 (MVSRMVSTMLSGLLFWLASGWTPAFA). A disordered region spans residues 106-132 (DFSEDQGYPDPPNPCPVGKTDDGCLEN). Residues Cys-120 and Cys-129 are joined by a disulfide bond. Ser-140 and Ser-204 each carry phosphoserine. The tract at residues 173-211 (GGERRKRRSVNPYLQGQRLDNVVAKKSVPHFSDEDKDPE) is disordered.

The protein belongs to the 7B2 family. Interacts with PCSK2/PC2 early in the secretory pathway. Dissociation occurs at later stages. In terms of processing, proteolytically cleaved in the Golgi by a furin-like convertase to generate bioactive peptides. Sulfated on tyrosine residues.

The protein localises to the secreted. Functionally, acts as a molecular chaperone for PCSK2/PC2, preventing its premature activation in the regulated secretory pathway. Binds to inactive PCSK2 in the endoplasmic reticulum and facilitates its transport from there to later compartments of the secretory pathway where it is proteolytically matured and activated. Also required for cleavage of PCSK2 but does not appear to be involved in its folding. Plays a role in regulating pituitary hormone secretion. The C-terminal peptide inhibits PCSK2 in vitro. The sequence is that of Neuroendocrine protein 7B2 (SCG5) from Pan troglodytes (Chimpanzee).